The sequence spans 418 residues: Secreted beta-glucosidase SUN41 (418 aa).

An N-terminal signal peptide occupies residues 1 to 23; sequence MRFSQATVLAFAALSLAAPAFEA. A compositionally biased stretch (low complexity) spans 81–97; the sequence is SEETSSTSTSISSTTTI. Residues 81-150 form a disordered region; that stretch reads SEETSSTSTS…SGSTNGIEGD (70 aa). N100 carries N-linked (GlcNAc...) asparagine glycosylation. Residues 112–126 are compositionally biased toward polar residues; the sequence is SLPSGTIKPSSFATE. A compositionally biased stretch (low complexity) spans 127–136; the sequence is SQSQSQSSST.

The protein belongs to the SUN family. In terms of processing, predicted to be a substrate for cleavage by KEX2.

Its subcellular location is the secreted. The protein localises to the cell wall. In terms of biological role, cell surface beta-glucosidase involved in cytokinesis, cell wall biogenesis, adhesion to host tissue, and biofilm formation; thus playing an important role in the host-pathogen interaction. Has hydrolytic activity on linear (1-&gt;3)-beta-D-glucans such as laminaribiose and other laminarioligosaccharides. The sequence is that of Secreted beta-glucosidase SUN41 from Candida albicans (strain SC5314 / ATCC MYA-2876) (Yeast).